The chain runs to 168 residues: Probable prefoldin subunit 5 (168 aa).

It belongs to the prefoldin subunit alpha family. As to quaternary structure, heterohexamer of two PFD-alpha type and four PFD-beta type subunits.

Functionally, binds specifically to cytosolic chaperonin (c-CPN) and transfers target proteins to it. Binds to nascent polypeptide chain and promotes folding in an environment in which there are many competing pathways for nonnative proteins. The polypeptide is Probable prefoldin subunit 5 (Drosophila melanogaster (Fruit fly)).